The chain runs to 497 residues: Glycerol kinase (497 aa).

T12 contributes to the ADP binding site. ATP contacts are provided by T12, T13, and S14. Sn-glycerol 3-phosphate is bound at residue T12. Position 16 (R16) interacts with ADP. R82, E83, Y132, and D239 together coordinate sn-glycerol 3-phosphate. Glycerol-binding residues include R82, E83, Y132, D239, and Q240. ADP is bound by residues T261 and G303. T261, G303, Q307, and G402 together coordinate ATP. The ADP site is built by G402 and N406.

This sequence belongs to the FGGY kinase family. Homodimer.

The enzyme catalyses glycerol + ATP = sn-glycerol 3-phosphate + ADP + H(+). Its pathway is polyol metabolism; glycerol degradation via glycerol kinase pathway; sn-glycerol 3-phosphate from glycerol: step 1/1. Its function is as follows. Key enzyme in the regulation of glycerol uptake and metabolism. Catalyzes the phosphorylation of glycerol to yield sn-glycerol 3-phosphate. Can utilize other nucleoside triphosphates (GTP, CTP, UTP and ITP) as a phosphoryl donor. The protein is Glycerol kinase of Thermococcus kodakarensis (strain ATCC BAA-918 / JCM 12380 / KOD1) (Pyrococcus kodakaraensis (strain KOD1)).